A 237-amino-acid polypeptide reads, in one-letter code: Leucyl/phenylalanyl-tRNA--protein transferase (237 aa).

The protein belongs to the L/F-transferase family.

The protein resides in the cytoplasm. The catalysed reaction is N-terminal L-lysyl-[protein] + L-leucyl-tRNA(Leu) = N-terminal L-leucyl-L-lysyl-[protein] + tRNA(Leu) + H(+). It catalyses the reaction N-terminal L-arginyl-[protein] + L-leucyl-tRNA(Leu) = N-terminal L-leucyl-L-arginyl-[protein] + tRNA(Leu) + H(+). It carries out the reaction L-phenylalanyl-tRNA(Phe) + an N-terminal L-alpha-aminoacyl-[protein] = an N-terminal L-phenylalanyl-L-alpha-aminoacyl-[protein] + tRNA(Phe). Its function is as follows. Functions in the N-end rule pathway of protein degradation where it conjugates Leu, Phe and, less efficiently, Met from aminoacyl-tRNAs to the N-termini of proteins containing an N-terminal arginine or lysine. This is Leucyl/phenylalanyl-tRNA--protein transferase from Shewanella baltica (strain OS195).